Here is a 151-residue protein sequence, read N- to C-terminus: MKYCKPKSKSILSLDVGLKRIGLAYCDSLFITVNILPALKRERNNNEIIIIKEHIKKHNLTGFIVGLPLDEAGGMTSQALDCKTYGEFLFNELKLPFSFVNEHSSTWESTNRFGVKKDKSGLIDSLSAKIILEQWIQEGPELKELVGNKQI.

The protein belongs to the YqgF nuclease family.

Its subcellular location is the cytoplasm. Functionally, could be a nuclease involved in processing of the 5'-end of pre-16S rRNA. This Prochlorococcus marinus subsp. pastoris (strain CCMP1986 / NIES-2087 / MED4) protein is Putative pre-16S rRNA nuclease.